Reading from the N-terminus, the 238-residue chain is Riboflavin-binding protein (238 aa).

The signal sequence occupies residues methionine 1–cysteine 17. A Pyrrolidone carboxylic acid modification is found at glutamine 18. 9 cysteine pairs are disulfide-bonded: cysteine 22–cysteine 49, cysteine 41–cysteine 90, cysteine 50–cysteine 94, cysteine 74–cysteine 155, cysteine 81–cysteine 127, cysteine 116–cysteine 186, cysteine 120–cysteine 169, cysteine 133–cysteine 151, and cysteine 184–cysteine 219. A glycan (N-linked (GlcNAc...) asparagine) is linked at asparagine 53. The N-linked (GlcNAc...) asparagine glycan is linked to asparagine 164. Residues serine 204, serine 205, serine 208, serine 209, serine 210, serine 212, serine 213, and serine 214 each carry the phosphoserine modification.

It belongs to the folate receptor family. In terms of processing, plasma and yolk RBPS have the same carbohydrate components, whereas egg-white RBP has a different, ovomucoid-type carbohydrate chain. Plasma RBP has the same C-terminal sequence as the egg-white RBP, which suggests that the C-terminal residues are cleaved off upon incorporation into the oocyte. Yolk RBP is synthesized in the liver; egg-white RBP is synthesized in the oviduct.

Its function is as follows. Required for the transport of riboflavin to the developing oocyte. The polypeptide is Riboflavin-binding protein (Gallus gallus (Chicken)).